The sequence spans 463 residues: Major capsid protein (463 aa).

The protein belongs to the NCLDV major capsid protein family. In terms of assembly, homotrimer.

The protein resides in the virion. Functionally, major capsid protein that self assembles to form an icosahedral capsid. Represents around 50% of the total virion protein mass. The chain is Major capsid protein (MCP) from Rana tigrina ranavirus.